A 211-amino-acid polypeptide reads, in one-letter code: Thiamine-phosphate synthase (211 aa).

4-amino-2-methyl-5-(diphosphooxymethyl)pyrimidine-binding positions include 37–41 (QLRIK) and Asn69. Positions 70 and 89 each coordinate Mg(2+). Position 108 (Ser108) interacts with 4-amino-2-methyl-5-(diphosphooxymethyl)pyrimidine. 134–136 (TQT) serves as a coordination point for 2-[(2R,5Z)-2-carboxy-4-methylthiazol-5(2H)-ylidene]ethyl phosphate. Lys137 contributes to the 4-amino-2-methyl-5-(diphosphooxymethyl)pyrimidine binding site. Residues Gly166 and 186-187 (VS) each bind 2-[(2R,5Z)-2-carboxy-4-methylthiazol-5(2H)-ylidene]ethyl phosphate.

It belongs to the thiamine-phosphate synthase family. Mg(2+) serves as cofactor.

The catalysed reaction is 2-[(2R,5Z)-2-carboxy-4-methylthiazol-5(2H)-ylidene]ethyl phosphate + 4-amino-2-methyl-5-(diphosphooxymethyl)pyrimidine + 2 H(+) = thiamine phosphate + CO2 + diphosphate. The enzyme catalyses 2-(2-carboxy-4-methylthiazol-5-yl)ethyl phosphate + 4-amino-2-methyl-5-(diphosphooxymethyl)pyrimidine + 2 H(+) = thiamine phosphate + CO2 + diphosphate. It carries out the reaction 4-methyl-5-(2-phosphooxyethyl)-thiazole + 4-amino-2-methyl-5-(diphosphooxymethyl)pyrimidine + H(+) = thiamine phosphate + diphosphate. Its pathway is cofactor biosynthesis; thiamine diphosphate biosynthesis; thiamine phosphate from 4-amino-2-methyl-5-diphosphomethylpyrimidine and 4-methyl-5-(2-phosphoethyl)-thiazole: step 1/1. Functionally, condenses 4-methyl-5-(beta-hydroxyethyl)thiazole monophosphate (THZ-P) and 2-methyl-4-amino-5-hydroxymethyl pyrimidine pyrophosphate (HMP-PP) to form thiamine monophosphate (TMP). The polypeptide is Thiamine-phosphate synthase (Escherichia coli O139:H28 (strain E24377A / ETEC)).